Reading from the N-terminus, the 893-residue chain is Serine/threonine-protein kinase PLK4 (893 aa).

The region spanning 12–265 is the Protein kinase domain; that stretch reads FRVGNLLGKG…LSSVLDHPFM (254 aa). ATP contacts are provided by residues 18–26 and lysine 41; that span reads LGKGSFAGV. Lysine 45 and lysine 46 each carry N6-acetyllysine. Catalysis depends on aspartate 136, which acts as the Proton acceptor. The span at 349-358 shows a compositional bias: polar residues; that stretch reads NQEQETSNSG. Positions 349-393 are disordered; sequence NQEQETSNSGRGRVIQEAEERPHSRYLRRAHSSDRSETSHGQSRV. The span at 362-371 shows a compositional bias: basic and acidic residues; it reads VIQEAEERPH. Serine 403 and serine 588 each carry phosphoserine. The Cryptic POLO box 1 (CPB1) domain occupies 509-622; that stretch reads TLRSITSPLT…SRFVQLVRSK (114 aa). Residues 623 to 736 enclose the Cryptic POLO box 2 (CPB2) domain; sequence SPKITYFTRY…GRRPSSTSSP (114 aa). The segment at 730 to 749 is disordered; that stretch reads PSSTSSPKALTPPPPVDPNY. Residues 809–887 enclose the POLO box domain; the sequence is QLLKSVFVKN…LSSILLMFSN (79 aa).

It belongs to the protein kinase superfamily. Ser/Thr protein kinase family. CDC5/Polo subfamily. In terms of assembly, homodimer. Interacts with CEP152 (via N-terminus). Interacts with CEP78; this interaction may be important for proper PLK4 localization to the centriole and PLK4-induced overduplication of centrioles. Interacts with CEP131. Interacts simultaneously with TENT5C and CEP192. Interacts with TENT5C; this interaction leads to the TENT5C recruitment in the centrosome. Interacts with CEP85; this interaction may be important in cell migration and centriole assembly. Ubiquitinated; leading to its degradation by the proteasome. Post-translationally, tyrosine-phosphorylated by TEC. In terms of processing, acetylation by KAT2A and KAT2B impairs kinase activity by shifting the kinase to an inactive conformation.

It is found in the cytoplasm. Its subcellular location is the cytoskeleton. The protein localises to the microtubule organizing center. It localises to the centrosome. The protein resides in the centriole. It is found in the nucleus. Its subcellular location is the nucleolus. The protein localises to the cleavage furrow. The catalysed reaction is L-seryl-[protein] + ATP = O-phospho-L-seryl-[protein] + ADP + H(+). The enzyme catalyses L-threonyl-[protein] + ATP = O-phospho-L-threonyl-[protein] + ADP + H(+). Its function is as follows. Serine/threonine-protein kinase that plays a central role in centriole duplication. Able to trigger procentriole formation on the surface of the parental centriole cylinder, leading to the recruitment of centriole biogenesis proteins such as SASS6, CPAP, CCP110, CEP135 and gamma-tubulin. When overexpressed, it is able to induce centrosome amplification through the simultaneous generation of multiple procentrioles adjoining each parental centriole during S phase. Phosphorylates 'Ser-151' of FBXW5 during the G1/S transition, leading to inhibit FBXW5 ability to ubiquitinate SASS6. Its central role in centriole replication suggests a possible role in tumorigenesis, centrosome aberrations being frequently observed in tumors. Also involved in deuterosome-mediated centriole amplification in multiciliated that can generate more than 100 centrioles. Also involved in trophoblast differentiation by phosphorylating HAND1, leading to disrupt the interaction between HAND1 and MDFIC and activate HAND1. Phosphorylates CDC25C and CHEK2. Required for the recruitment of STIL to the centriole and for STIL-mediated centriole amplification. Phosphorylates CEP131 and PCM1 which is essential for proper organization and integrity of centriolar satellites. The protein is Serine/threonine-protein kinase PLK4 of Bos taurus (Bovine).